A 105-amino-acid chain; its full sequence is Small ribosomal subunit protein uS10 (105 aa).

It belongs to the universal ribosomal protein uS10 family. In terms of assembly, part of the 30S ribosomal subunit.

In terms of biological role, involved in the binding of tRNA to the ribosomes. The polypeptide is Small ribosomal subunit protein uS10 (Chlamydia abortus (strain DSM 27085 / S26/3) (Chlamydophila abortus)).